The chain runs to 215 residues: Ribonuclease T (215 aa).

Residues 20-194 (VVIDVETAGF…YDTERTAVLF (175 aa)) enclose the Exonuclease domain. 4 residues coordinate Mg(2+): Asp23, Glu25, His181, and Asp186. The active-site Proton donor/acceptor is His181.

This sequence belongs to the RNase T family. As to quaternary structure, homodimer. The cofactor is Mg(2+).

Functionally, trims short 3' overhangs of a variety of RNA species, leaving a one or two nucleotide 3' overhang. Responsible for the end-turnover of tRNA: specifically removes the terminal AMP residue from uncharged tRNA (tRNA-C-C-A). Also appears to be involved in tRNA biosynthesis, especially in strains lacking other exoribonucleases. A general regulator of small RNAs (sRNA), contributes to their degradation. Upon overexpression suppresses sRNA-mediated RhyB-silencing of multiple RNA targets; overexpression leads to nearly complete loss of RhyB sRNA. This is Ribonuclease T from Escherichia coli (strain K12).